A 239-amino-acid chain; its full sequence is Octanoyl-[acyl-carrier-protein]:protein N-octanoyltransferase LIPT2, mitochondrial (239 aa).

The transit peptide at 1 to 18 (MSVPVLRVRRLGLVGYAE) directs the protein to the mitochondrion. The 181-residue stretch at 37–217 (GSPGGALLLC…AFEEEFQCQL (181 aa)) folds into the BPL/LPL catalytic domain. Substrate-binding positions include 81–88 (RGGLITFH), 147–149 (AIG), and 160–162 (GLA). C178 functions as the Acyl-thioester intermediate in the catalytic mechanism. A disordered region spans residues 220 to 239 (EQNPEQNPVQNRPDRDAGPL).

The protein belongs to the LipB family.

It is found in the mitochondrion. The catalysed reaction is octanoyl-[ACP] + L-lysyl-[protein] = N(6)-octanoyl-L-lysyl-[protein] + holo-[ACP] + H(+). It functions in the pathway protein modification; protein lipoylation via endogenous pathway; protein N(6)-(lipoyl)lysine from octanoyl-[acyl-carrier-protein]: step 1/2. Its function is as follows. Catalyzes the transfer of endogenously produced octanoic acid from octanoyl-acyl-carrier-protein (octanoyl-ACP) onto the lipoyl domains of lipoate-dependent enzymes such as the protein H of the glycine cleavage system (GCSH). Lipoyl-ACP can also act as a substrate although octanoyl-ACP is likely to be the physiological substrate. The sequence is that of Octanoyl-[acyl-carrier-protein]:protein N-octanoyltransferase LIPT2, mitochondrial (lipt2) from Xenopus tropicalis (Western clawed frog).